We begin with the raw amino-acid sequence, 333 residues long: Ornithine carbamoyltransferase (333 aa).

Residues 56-59 (STRT), Q83, R107, and 134-137 (HPTQ) contribute to the carbamoyl phosphate site. Residues N167, D231, and 235 to 236 (SM) contribute to the L-ornithine site. Carbamoyl phosphate-binding positions include 273-274 (CL) and R318.

This sequence belongs to the aspartate/ornithine carbamoyltransferase superfamily. OTCase family.

The protein localises to the cytoplasm. The enzyme catalyses carbamoyl phosphate + L-ornithine = L-citrulline + phosphate + H(+). It functions in the pathway amino-acid biosynthesis; L-arginine biosynthesis; L-arginine from L-ornithine and carbamoyl phosphate: step 1/3. Its function is as follows. Reversibly catalyzes the transfer of the carbamoyl group from carbamoyl phosphate (CP) to the N(epsilon) atom of ornithine (ORN) to produce L-citrulline. The chain is Ornithine carbamoyltransferase (argF) from Staphylococcus aureus (strain COL).